A 114-amino-acid chain; its full sequence is UPF0145 protein TTHA1944 (114 aa).

Belongs to the UPF0145 family.

The chain is UPF0145 protein TTHA1944 from Thermus thermophilus (strain ATCC 27634 / DSM 579 / HB8).